A 592-amino-acid polypeptide reads, in one-letter code: Putative esterase (592 aa).

A helical membrane pass occupies residues 12–32; it reads LTLIAYLSVLMGVSVYFYVLI. 5 N-linked (GlcNAc...) asparagine; by host glycosylation sites follow: N68, N83, N95, N447, and N510. H513 (charge relay system) is an active-site residue. N528 carries an N-linked (GlcNAc...) asparagine; by host glycan.

The protein belongs to the type-B carboxylesterase/lipase family.

The protein resides in the membrane. It carries out the reaction a carboxylic ester + H2O = an alcohol + a carboxylate + H(+). The polypeptide is Putative esterase (Spodoptera frugiperda (Fall armyworm)).